The chain runs to 89 residues: Barrier-to-autointegration factor 1 (89 aa).

Belongs to the BAF family. Interacts with emr-1 and lem-2. Interacts with lem-4l, leading to decreased phosphorylation by VRK1 and promoting dephosphorylation by protein phosphatase 2A (PP2A). Post-translationally, phosphorylated by vrk-1. Phosphorylation by vrk-1 in mitosis is essential to achieve correct timing of recruitment of nuclear envelope components during nuclear envelope assembly. Dephosphorylated by protein phosphatase 2A (PP2A) following interaction with lem-4l during mitotic exit, leading to mitotic nuclear envelope reassembly.

Its subcellular location is the nucleus. Its function is as follows. DNA-binding protein which plays an essential role in nuclear envelope formation. Required for normal chromosome segregation during mitosis. Associates with the nuclear lamina via its interaction with LEM domain containing proteins emr-1 and lem-2. In association with lem-3, plays a role in radiation-induced DNA damage repair response. The sequence is that of Barrier-to-autointegration factor 1 (baf-1) from Caenorhabditis elegans.